A 395-amino-acid polypeptide reads, in one-letter code: MLTTMSASSNTNSLIEKEIDDEDMLSPIKSNNLVVRVNQDTDDNLQALFDSVLNPGDAKRPLQLPLRMRKLPNSFFTPPAPSHSRANSADSTYDAGSQSSINIGNKASIVQQPDGQSPIAAIPQLQIQPSPQHSRLAIHHSRARSSPASLQQNYNVRARSDAAAANNPNANPSSQQQPAGPTFPENSAQEFPSGAPASSAIDLDAMNTCMSQDIPMSMQTVHKKQRSYDVISPIQLNRQLGALPPGWEQAKTNDGQIYYLNHTTKSTQWEDPRIQYRQQQQILMAERIKQNDVLQTTKQTTTSTIANNLGPLPDGWEQAVTESGDLYFINHIDRTTSWNDPRMQSGLSVLDCPDNLVSSLQIEDNLCSNLFNDAQAIVNPPSSHKPDDLEWYKIN.

Positions 73–100 (NSFFTPPAPSHSRANSADSTYDAGSQSS) are disordered. A phosphoserine mark is found at Ser82, Ser88, Ser100, Ser117, and Ser145. A compositionally biased stretch (polar residues) spans 84 to 100 (SRANSADSTYDAGSQSS). Disordered regions lie at residues 129–150 (PSPQ…PASL) and 162–199 (AAAA…PASS). The residue at position 146 (Ser146) is a Phosphoserine; by CDK7. Ser149 bears the Phosphoserine mark. Low complexity predominate over residues 162–179 (AAAANNPNANPSSQQQPA). Ser227 is modified (phosphoserine). Residue Tyr228 is modified to Phosphotyrosine. Ser232 is modified (phosphoserine). WW domains are found at residues 241 to 274 (GALP…DPRI) and 310 to 343 (GPLP…DPRM).

The protein belongs to the YAP1 family. As to quaternary structure, interacts (via WW domains) with wts. Interacts (via N-terminus) with sd (via C-terminus) and this interaction enhances the transcriptional activity of sd. The phosphorylated form interacts with 14-3-3epsilon and 14-3-3zeta. Interacts with Ack and ex. Its activity is regulated by multiple phosphorylation events. Phosphorylation at Ser-88, Ser-145 and Ser-227 negatively regulate its activity and restrict its nuclear localization. Wts-mediated phosphorylation at Ser-145 promotes interaction with 14-3-3epsilon and 14-3-3zeta. Phosphorylation at Ser-88 and Ser-227 regulate nuclear localization and activity independent of 14-3-3 association. Phosphorylation at Ser-146 by Cdk7 promotes its stability by preventing ubiquitination by the DCX(DCAF12) complex. In terms of processing, ubiquitinated by the DCX(DCAF12) complex, leading to its degradation. Phosphorylation at Ser-146 by Cdk7 prevents ubiquitination by the DCX(DCAF12) complex.

Its subcellular location is the cytoplasm. It is found in the nucleus. Transcriptional coactivator which is the critical downstream regulatory target in the Hippo/SWH (Sav/Wts/Hpo) signaling pathway that plays a pivotal role in organ size control and tumor suppression by restricting proliferation and promoting apoptosis. The core of this pathway is composed of a kinase cascade wherein Hippo (Hpo), in complex with its regulatory protein Salvador (Sav), phosphorylates and activates Warts (Wts) in complex with its regulatory protein Mats, which in turn phosphorylates and inactivates the Yorkie (Yki) oncoprotein. The Hippo/SWH signaling pathway inhibits the activity of the transcriptional complex formed by Scalloped (sd) and Yki and the target genes of this pathway include cyclin-E (cycE), diap1 and bantam. Regulates the expression of G1/S-specific CycE and diap1, thereby promoting cell proliferation and inhibiting apoptosis. Required for transcriptional activity of sd in wing imaginal disks. Induces expression of expression of vestigial (vg) in wing and haltere disks and the expression of transcription factor E2f (E2f). The protein is Transcriptional coactivator yorkie (yki) of Drosophila melanogaster (Fruit fly).